Reading from the N-terminus, the 609-residue chain is Glutamine--fructose-6-phosphate aminotransferase [isomerizing] (609 aa).

Residue Cys-2 is the Nucleophile; for GATase activity of the active site. A Glutamine amidotransferase type-2 domain is found at 2 to 219 (CGIFGYIGAK…SGELAVVGLG (218 aa)). SIS domains follow at residues 280-426 (ISEK…LKQT) and 458-599 (WAND…IDRP). The For Fru-6P isomerization activity role is filled by Lys-604.

Homodimer.

It is found in the cytoplasm. The enzyme catalyses D-fructose 6-phosphate + L-glutamine = D-glucosamine 6-phosphate + L-glutamate. Its function is as follows. Catalyzes the first step in hexosamine metabolism, converting fructose-6P into glucosamine-6P using glutamine as a nitrogen source. This Chlamydia caviae (strain ATCC VR-813 / DSM 19441 / 03DC25 / GPIC) (Chlamydophila caviae) protein is Glutamine--fructose-6-phosphate aminotransferase [isomerizing].